A 550-amino-acid polypeptide reads, in one-letter code: Eukaryotic translation initiation factor 3 subunit L (550 aa).

The tract at residues 1-20 is disordered; sequence MVRDSFDGGHTGDPERDLAY. Residues 309–503 form the PCI domain; the sequence is EATKIFVNCL…IDDSTTDLDF (195 aa).

The protein belongs to the eIF-3 subunit L family. Component of the eukaryotic translation initiation factor 3 (eIF-3) complex.

It localises to the cytoplasm. Its function is as follows. Component of the eukaryotic translation initiation factor 3 (eIF-3) complex, which is involved in protein synthesis of a specialized repertoire of mRNAs and, together with other initiation factors, stimulates binding of mRNA and methionyl-tRNAi to the 40S ribosome. The eIF-3 complex specifically targets and initiates translation of a subset of mRNAs involved in cell proliferation. The sequence is that of Eukaryotic translation initiation factor 3 subunit L from Brugia malayi (Filarial nematode worm).